Consider the following 356-residue polypeptide: Tyrosine recombinase XerS (356 aa).

The region spanning 16–121 is the Core-binding (CB) domain; that stretch reads IMPWYVLDYY…ALSSLYKYLT (106 aa). The Tyr recombinase domain occupies 169 to 354; it reads AFLDYVDKEY…VNDEQKNALD (186 aa). Residues arginine 210, lysine 234, histidine 306, arginine 309, and histidine 332 contribute to the active site. The active-site O-(3'-phospho-DNA)-tyrosine intermediate is the tyrosine 341.

This sequence belongs to the 'phage' integrase family. XerS subfamily.

It is found in the cytoplasm. With respect to regulation, ftsK is required for recombination. In terms of biological role, site-specific tyrosine recombinase, which acts by catalyzing the cutting and rejoining of the recombining DNA molecules. Essential to convert dimers of the bacterial chromosome into monomers to permit their segregation at cell division. In Streptococcus pyogenes serotype M18 (strain MGAS8232), this protein is Tyrosine recombinase XerS.